The chain runs to 485 residues: ATP synthase subunit beta 2 (485 aa).

Over residues 1–10 (MSGMGEKSEQ) the composition is skewed to basic and acidic residues. The disordered stretch occupies residues 1–27 (MSGMGEKSEQISKSARSTDPQEQESVA). Residues 11 to 24 (ISKSARSTDPQEQE) show a composition bias toward polar residues. 177-184 (GGAGVGKT) contacts ATP.

The protein belongs to the ATPase alpha/beta chains family. As to quaternary structure, F-type ATPases have 2 components, CF(1) - the catalytic core - and CF(0) - the membrane proton channel. CF(1) has five subunits: alpha(3), beta(3), gamma(1), delta(1), epsilon(1). CF(0) has three main subunits: a(1), b(2) and c(9-12). The alpha and beta chains form an alternating ring which encloses part of the gamma chain. CF(1) is attached to CF(0) by a central stalk formed by the gamma and epsilon chains, while a peripheral stalk is formed by the delta and b chains.

It is found in the cell inner membrane. The catalysed reaction is ATP + H2O + 4 H(+)(in) = ADP + phosphate + 5 H(+)(out). In terms of biological role, produces ATP from ADP in the presence of a proton gradient across the membrane. The catalytic sites are hosted primarily by the beta subunits. This chain is ATP synthase subunit beta 2, found in Nitrosomonas eutropha (strain DSM 101675 / C91 / Nm57).